The chain runs to 359 residues: Mitochondrial glutathione transporter SLC25A39 (359 aa).

Residues Met1–Gln14 lie on the Mitochondrial intermembrane side of the membrane. Solcar repeat units follow at residues Ile9–Phe151, Ser159–Trp243, and Thr253–Phe347. A helical transmembrane segment spans residues Met15–Val35. Over Lys36–Arg121 the chain is Mitochondrial matrix. [2Fe-2S] cluster-binding residues include Cys74, Cys78, Cys88, and Cys94. Residues Thr122–Phe142 form a helical membrane-spanning segment. The Mitochondrial intermembrane portion of the chain corresponds to Thr143–Pro164. A helical transmembrane segment spans residues Met165–Val185. The Mitochondrial matrix portion of the chain corresponds to Arg186–Ser214. Residues Leu215–Phe235 form a helical membrane-spanning segment. Residues Asn236–Val255 are Mitochondrial intermembrane-facing. A helical membrane pass occupies residues Gly256–Phe276. Over Asp277–Arg317 the chain is Mitochondrial matrix. Residues Gly318–Ile338 form a helical membrane-spanning segment. Residues Ser339 to Pro359 lie on the Mitochondrial intermembrane side of the membrane.

It belongs to the mitochondrial carrier (TC 2.A.29) family. Post-translationally, cleaved and degraded by AFG3L2; degradation by AFG3L2 is regulated by the ability of SLC25A39 to bind iron-sulfur. In absence of mitochondrial glutathione, SLC25A39 binds iron-sulfur, preventing cleavage and degradation by AFG3L2. The presence of mitochondrial glutathione prevents iron-sulfur-binding to SLC25A39, promoting cleavage and degradation by AFG3L2.

The protein resides in the mitochondrion inner membrane. The catalysed reaction is glutathione(in) = glutathione(out). The activity of SLC25A39 is regulated by levels of mitochondrial glutathione via its ability to bind [2Fe-2S] iron-sulfur cluster. Upon physiological levels of mitochondrial glutathione, glutathione prevents iron-sulfur-binding to SLC25A39 promoting cleavage and degradation by AFG3L2. Upon depletion of mitochondrial glutathione, SLC25A39 binds iron-sulfur, preventing cleavage and degradation by AFG3L2. Mitochondrial transporter required for glutathione import into mitochondria. Glutathione, which plays key roles in oxidative metabolism, is produced exclusively in the cytosol and is imported in many organelles. Mitochondrial glutathione is required for the activity and stability of proteins containing iron-sulfur clusters, as well as erythropoiesis. The chain is Mitochondrial glutathione transporter SLC25A39 (SLC25A39) from Bos taurus (Bovine).